The primary structure comprises 536 residues: SNW domain-containing protein 1 (536 aa).

The tract at residues 1–44 (MALTSFLPAPTQLSQDQLEAEERARSQRSLQTSLVSSRREPPPY) is disordered. N-acetylalanine is present on alanine 2. Serine 14 bears the Phosphoserine mark. Polar residues predominate over residues 27 to 36 (QRSLQTSLVS). The interval 59–79 (GDGGAFPEIHVAQYPLDMGRK) is interaction with PPIL1. Residues lysine 81, lysine 97, lysine 115, lysine 122, lysine 141, lysine 158, and lysine 170 each participate in a glycyl lysine isopeptide (Lys-Gly) (interchain with G-Cter in SUMO2) cross-link. Residues 174-339 (AQYIRYTPSQ…KARERRAGIK (166 aa)) form an SNW region. A phosphoserine mark is found at serine 182 and serine 190. Residue lysine 193 forms a Glycyl lysine isopeptide (Lys-Gly) (interchain with G-Cter in SUMO2) linkage. The disordered stretch occupies residues 212–233 (FKINKKIPRGPPSPPAPVMHSP). Phosphoserine is present on residues serine 224, serine 232, and serine 234. Glycyl lysine isopeptide (Lys-Gly) (interchain with G-Cter in SUMO2) cross-links involve residues lysine 240, lysine 258, lysine 286, lysine 339, lysine 344, lysine 416, and lysine 441. The tract at residues 311–386 (KMAQKEKEKH…RSKLQRNENR (76 aa)) is disordered. Residue serine 446 is modified to Phosphoserine. Residue lysine 452 forms a Glycyl lysine isopeptide (Lys-Gly) (interchain with G-Cter in SUMO2) linkage. Basic and acidic residues-rich tracts occupy residues 467 to 489 (IKTNRFVPDKEFSGSDRKQRGRE) and 503 to 530 (KFLEEAKQHGGSKRPSDSSRPKEHEHEG). The interval 467–536 (IKTNRFVPDK…EHEGKKRRKE (70 aa)) is disordered. Serine 479 and serine 481 each carry phosphoserine. Residue lysine 509 forms a Glycyl lysine isopeptide (Lys-Gly) (interchain with G-Cter in SUMO2) linkage.

It belongs to the SNW family. As to quaternary structure, identified in the spliceosome C complex. Associates with U4/U6-U5 tri-small nuclear ribonucleoproteins (U4/U6-U5 tri-snRNPs). Component of the minor spliceosome, which splices U12-type introns. Interacts with SKI, SMAD2,SMAD3, RBPJ, RB1, PABPN1, MAGEA1, SIRT1, FOXN3, U2AF2, PPIL1, DAXX and ATP1B4. Interacts with VDR and RXRA; preferentially associates with VDR:RXRA heterodimers. Interacts with NCOR2. Interacts with MAML1. Interacts with NOTCH1 NICD; the interaction involves multimerized NOTCH1 NICD. Forms a complex with NOTCH1 NICD and MAML1; the association is dissociated by RBPJ. Associates with positive transcription elongation factor b (P-TEFb). Component of the SNARP complex which consists at least of SNIP1, SNW1, THRAP3, BCLAF1 and PNN.

The protein resides in the nucleus. Functionally, involved in pre-mRNA splicing as component of the spliceosome. As a component of the minor spliceosome, involved in the splicing of U12-type introns in pre-mRNAs. Required in the specific splicing of CDKN1A pre-mRNA; the function probably involves the recruitment of U2AF2 to the mRNA. May recruit PPIL1 to the spliceosome. May be involved in cyclin-D1/CCND1 mRNA stability through the SNARP complex which associates with both the 3'end of the CCND1 gene and its mRNA. Involved in transcriptional regulation. Modulates TGF-beta-mediated transcription via association with SMAD proteins, MYOD1-mediated transcription via association with PABPN1, RB1-mediated transcriptional repression, and retinoid-X receptor (RXR)- and vitamin D receptor (VDR)-dependent gene transcription in a cell line-specific manner probably involving coactivators NCOA1 and GRIP1. Is involved in NOTCH1-mediated transcriptional activation. Binds to multimerized forms of Notch intracellular domain (NICD) and is proposed to recruit transcriptional coactivators such as MAML1 to form an intermediate preactivation complex which associates with DNA-bound CBF-1/RBPJ to form a transcriptional activation complex by releasing SNW1 and redundant NOTCH1 NICD. This Mus musculus (Mouse) protein is SNW domain-containing protein 1 (Snw1).